A 396-amino-acid chain; its full sequence is 1-deoxy-D-xylulose 5-phosphate reductoisomerase (396 aa).

The NADPH site is built by T10, G11, S12, I13, and N123. K124 is a 1-deoxy-D-xylulose 5-phosphate binding site. E125 is a binding site for NADPH. D149 is a binding site for Mn(2+). Residues S150, E151, S185, and H208 each contribute to the 1-deoxy-D-xylulose 5-phosphate site. E151 serves as a coordination point for Mn(2+). G214 is a binding site for NADPH. Positions 221, 226, 227, and 230 each coordinate 1-deoxy-D-xylulose 5-phosphate. Residue E230 coordinates Mn(2+).

Belongs to the DXR family. It depends on Mg(2+) as a cofactor. Requires Mn(2+) as cofactor.

The catalysed reaction is 2-C-methyl-D-erythritol 4-phosphate + NADP(+) = 1-deoxy-D-xylulose 5-phosphate + NADPH + H(+). It participates in isoprenoid biosynthesis; isopentenyl diphosphate biosynthesis via DXP pathway; isopentenyl diphosphate from 1-deoxy-D-xylulose 5-phosphate: step 1/6. In terms of biological role, catalyzes the NADPH-dependent rearrangement and reduction of 1-deoxy-D-xylulose-5-phosphate (DXP) to 2-C-methyl-D-erythritol 4-phosphate (MEP). The sequence is that of 1-deoxy-D-xylulose 5-phosphate reductoisomerase from Shewanella frigidimarina (strain NCIMB 400).